The sequence spans 398 residues: Diaminopropionate ammonia-lyase (398 aa).

An N6-(pyridoxal phosphate)lysine modification is found at Lys77.

It belongs to the diaminopropionate ammonia-lyase family. In terms of assembly, homodimer. Pyridoxal 5'-phosphate is required as a cofactor.

The catalysed reaction is (S)-2,3-diaminopropanoate + H2O + H(+) = pyruvate + 2 NH4(+). It carries out the reaction (R)-2,3-diaminopropanoate + H2O + H(+) = pyruvate + 2 NH4(+). In terms of biological role, catalyzes the alpha,beta-elimination reaction of both L- and D-alpha,beta-diaminopropionate (DAP) to form pyruvate and ammonia. The D-isomer of serine is degraded to pyruvate, though very poorly; other amino acids (L-serine, D- and L-threonine, D- and L-beta-Cl-alanine) are not substrates. In Escherichia coli O157:H7, this protein is Diaminopropionate ammonia-lyase (ygeX).